Consider the following 337-residue polypeptide: Putative 2-aminoethylphosphonate-binding periplasmic protein (337 aa).

Positions 1-21 are cleaved as a signal peptide; it reads MKLSRLALLSVFALASAPSWA.

This sequence belongs to the bacterial solute-binding protein 1 family.

Its subcellular location is the periplasm. Functionally, probably part of the PhnSTUV complex (TC 3.A.1.11.5) involved in 2-aminoethylphosphonate import. The polypeptide is Putative 2-aminoethylphosphonate-binding periplasmic protein (phnS) (Salmonella paratyphi A (strain ATCC 9150 / SARB42)).